We begin with the raw amino-acid sequence, 321 residues long: Cytoskeleton protein RodZ (321 aa).

The Cytoplasmic portion of the chain corresponds to 1–111 (MNTEATHDQN…LGKRRKKRDG (111 aa)). The HTH cro/C1-type domain occupies 19-71 (LRNAREQLGLSQQAVAERLCLKVSTVRDIEEDKAPSDLASTFLRGYIRSYARL). Positions 30–49 (QQAVAERLCLKVSTVRDIEE) form a DNA-binding region, H-T-H motif. The helical; Signal-anchor for type II membrane protein transmembrane segment at 112-132 (WLMSFTWLVLFVVVGLTGAWW) threads the bilayer. The Periplasmic segment spans residues 133–321 (WQNHKAQQEE…TINAEPTSAQ (189 aa)). Residues 167–190 (DTRAAASQDTTPAETAPAAPVDST) form a disordered region. The segment covering 176 to 190 (TTPAETAPAAPVDST) has biased composition (low complexity).

The protein belongs to the RodZ family.

The protein resides in the cell inner membrane. In terms of biological role, cytoskeletal protein that is involved in cell-shape control through regulation of the length of the long axis. This is Cytoskeleton protein RodZ from Salmonella arizonae (strain ATCC BAA-731 / CDC346-86 / RSK2980).